The primary structure comprises 527 residues: Phosphoenolpyruvate carboxykinase (ATP) (527 aa).

Positions 55, 191, and 197 each coordinate substrate. Residues Lys197, His216, and 232–240 (GLSGTGKTT) each bind ATP. Lys197 and His216 together coordinate Mn(2+). Asp253 lines the Mn(2+) pocket. 3 residues coordinate ATP: Glu281, Arg318, and Thr443. Residue Arg318 coordinates substrate.

Belongs to the phosphoenolpyruvate carboxykinase (ATP) family. Mn(2+) serves as cofactor.

Its subcellular location is the cytoplasm. The catalysed reaction is oxaloacetate + ATP = phosphoenolpyruvate + ADP + CO2. Its pathway is carbohydrate biosynthesis; gluconeogenesis. Its function is as follows. Involved in the gluconeogenesis. Catalyzes the conversion of oxaloacetate (OAA) to phosphoenolpyruvate (PEP) through direct phosphoryl transfer between the nucleoside triphosphate and OAA. The sequence is that of Phosphoenolpyruvate carboxykinase (ATP) from Brevibacillus brevis (strain 47 / JCM 6285 / NBRC 100599).